The primary structure comprises 474 residues: Cysteine--tRNA ligase (474 aa).

A Zn(2+)-binding site is contributed by Cys27. Residues 29 to 39 (PTVYNYIHIGN) carry the 'HIGH' region motif. Positions 212, 237, and 241 each coordinate Zn(2+). Positions 271–275 (KMSKS) match the 'KMSKS' region motif. Lys274 contributes to the ATP binding site.

Belongs to the class-I aminoacyl-tRNA synthetase family. As to quaternary structure, monomer. Zn(2+) serves as cofactor.

The protein localises to the cytoplasm. The enzyme catalyses tRNA(Cys) + L-cysteine + ATP = L-cysteinyl-tRNA(Cys) + AMP + diphosphate. In Lactobacillus delbrueckii subsp. bulgaricus (strain ATCC BAA-365 / Lb-18), this protein is Cysteine--tRNA ligase.